Consider the following 82-residue polypeptide: Toxin TdNa6 (82 aa).

The first 20 residues, 1 to 20, serve as a signal peptide directing secretion; the sequence is MKGMIMLISCLMLIEVVVGG. Positions 21-82 constitute an LCN-type CS-alpha/beta domain; the sequence is KEGYLLDRSN…KMWHLKTNKC (62 aa). Cystine bridges form between C32-C82, C36-C58, C44-C63, and C48-C65.

Belongs to the long (4 C-C) scorpion toxin superfamily. Sodium channel inhibitor family. Beta subfamily. Expressed by the venom gland.

Its subcellular location is the secreted. Beta toxins bind voltage-independently at site-4 of sodium channels (Nav) and shift the voltage of activation toward more negative potentials thereby affecting sodium channel activation and promoting spontaneous and repetitive firing. Is toxic to arthropods. In Tityus discrepans (Venezuelan scorpion), this protein is Toxin TdNa6.